We begin with the raw amino-acid sequence, 652 residues long: DNA mismatch repair protein MutL (652 aa).

This sequence belongs to the DNA mismatch repair MutL/HexB family.

In terms of biological role, this protein is involved in the repair of mismatches in DNA. It is required for dam-dependent methyl-directed DNA mismatch repair. May act as a 'molecular matchmaker', a protein that promotes the formation of a stable complex between two or more DNA-binding proteins in an ATP-dependent manner without itself being part of a final effector complex. This Aliivibrio salmonicida (strain LFI1238) (Vibrio salmonicida (strain LFI1238)) protein is DNA mismatch repair protein MutL.